Reading from the N-terminus, the 612-residue chain is Glutamine--fructose-6-phosphate aminotransferase [isomerizing] (612 aa).

Cys-2 acts as the Nucleophile; for GATase activity in catalysis. The 219-residue stretch at 2-220 folds into the Glutamine amidotransferase type-2 domain; the sequence is CGIVGAIRAH…DGDIALLASD (219 aa). SIS domains follow at residues 288–428 and 461–602; these read AKSV…VRGL and WAQQ…VDKP. The active-site For Fru-6P isomerization activity is the Lys-607.

As to quaternary structure, homodimer.

The protein resides in the cytoplasm. The catalysed reaction is D-fructose 6-phosphate + L-glutamine = D-glucosamine 6-phosphate + L-glutamate. Functionally, catalyzes the first step in hexosamine metabolism, converting fructose-6P into glucosamine-6P using glutamine as a nitrogen source. This chain is Glutamine--fructose-6-phosphate aminotransferase [isomerizing], found in Neisseria meningitidis serogroup A / serotype 4A (strain DSM 15465 / Z2491).